A 364-amino-acid chain; its full sequence is tRNA 2-selenouridine synthase (364 aa).

A Rhodanese domain is found at 14 to 137 (LIADTPIIDV…LRQTAIQATI (124 aa)). Cys97 acts as the S-selanylcysteine intermediate in catalysis.

This sequence belongs to the SelU family. Monomer.

The enzyme catalyses 5-methylaminomethyl-2-thiouridine(34) in tRNA + selenophosphate + (2E)-geranyl diphosphate + H2O + H(+) = 5-methylaminomethyl-2-selenouridine(34) in tRNA + (2E)-thiogeraniol + phosphate + diphosphate. The catalysed reaction is 5-methylaminomethyl-2-thiouridine(34) in tRNA + (2E)-geranyl diphosphate = 5-methylaminomethyl-S-(2E)-geranyl-thiouridine(34) in tRNA + diphosphate. It carries out the reaction 5-methylaminomethyl-S-(2E)-geranyl-thiouridine(34) in tRNA + selenophosphate + H(+) = 5-methylaminomethyl-2-(Se-phospho)selenouridine(34) in tRNA + (2E)-thiogeraniol. It catalyses the reaction 5-methylaminomethyl-2-(Se-phospho)selenouridine(34) in tRNA + H2O = 5-methylaminomethyl-2-selenouridine(34) in tRNA + phosphate. In terms of biological role, involved in the post-transcriptional modification of the uridine at the wobble position (U34) of tRNA(Lys), tRNA(Glu) and tRNA(Gln). Catalyzes the conversion of 2-thiouridine (S2U-RNA) to 2-selenouridine (Se2U-RNA). Acts in a two-step process involving geranylation of 2-thiouridine (S2U) to S-geranyl-2-thiouridine (geS2U) and subsequent selenation of the latter derivative to 2-selenouridine (Se2U) in the tRNA chain. This Escherichia coli O127:H6 (strain E2348/69 / EPEC) protein is tRNA 2-selenouridine synthase.